The primary structure comprises 269 residues: uncharacterized protein (269 aa).

ATP contacts are provided by residues 12-19 and 130-137; these read GKGGTGKS and GYLIVGKS.

It to M.jannaschii MJ0578.

This is an uncharacterized protein from Methanocaldococcus jannaschii (strain ATCC 43067 / DSM 2661 / JAL-1 / JCM 10045 / NBRC 100440) (Methanococcus jannaschii).